Reading from the N-terminus, the 152-residue chain is Small ribosomal subunit protein uS15 (152 aa).

Residues 1–11 (MAKMHTKRKGK) show a composition bias toward basic residues. Positions 1–22 (MAKMHTKRKGKSSSTRPIRTEP) are disordered.

The protein belongs to the universal ribosomal protein uS15 family. As to quaternary structure, part of the 30S ribosomal subunit.

This is Small ribosomal subunit protein uS15 from Methanosarcina barkeri (strain Fusaro / DSM 804).